The chain runs to 61 residues: Short neurotoxin 2 (61 aa).

Intrachain disulfides connect C3/C23, C17/C40, C42/C53, and C54/C59.

It belongs to the three-finger toxin family. Short-chain subfamily. Type I alpha-neurotoxin sub-subfamily. Expressed by the venom gland.

It localises to the secreted. Binds to muscle nicotinic acetylcholine receptor (nAChR) and inhibit acetylcholine from binding to the receptor, thereby impairing neuromuscular transmission. The polypeptide is Short neurotoxin 2 (Naja annulifera (Banded Egyptian cobra)).